Consider the following 172-residue polypeptide: Small ribosomal subunit protein uS5 (172 aa).

Residues 17-80 form the S5 DRBM domain; the sequence is LREKMISVNR…DEARRKMVKV (64 aa).

This sequence belongs to the universal ribosomal protein uS5 family. Part of the 30S ribosomal subunit. Contacts proteins S4 and S8.

Functionally, with S4 and S12 plays an important role in translational accuracy. Its function is as follows. Located at the back of the 30S subunit body where it stabilizes the conformation of the head with respect to the body. The sequence is that of Small ribosomal subunit protein uS5 from Cupriavidus pinatubonensis (strain JMP 134 / LMG 1197) (Cupriavidus necator (strain JMP 134)).